The following is a 144-amino-acid chain: 3-dehydroquinate dehydratase (144 aa).

The active-site Proton acceptor is the Tyr-22. Residues Asn-73, His-79, and Asp-86 each coordinate substrate. The Proton donor role is filled by His-99. Residues 100 to 101 (LS) and Arg-110 each bind substrate.

Belongs to the type-II 3-dehydroquinase family. As to quaternary structure, homododecamer.

The catalysed reaction is 3-dehydroquinate = 3-dehydroshikimate + H2O. Its pathway is metabolic intermediate biosynthesis; chorismate biosynthesis; chorismate from D-erythrose 4-phosphate and phosphoenolpyruvate: step 3/7. Functionally, catalyzes a trans-dehydration via an enolate intermediate. This Pelotomaculum thermopropionicum (strain DSM 13744 / JCM 10971 / SI) protein is 3-dehydroquinate dehydratase.